A 254-amino-acid chain; its full sequence is Alcohol dehydrogenase (254 aa).

An NAD(+)-binding site is contributed by 10 to 33 (FVAGLGGIGLDTSREIVKSGPKNL). A substrate-binding site is contributed by Ser138. Tyr151 functions as the Proton acceptor in the catalytic mechanism.

It belongs to the short-chain dehydrogenases/reductases (SDR) family. As to quaternary structure, homodimer.

The enzyme catalyses a primary alcohol + NAD(+) = an aldehyde + NADH + H(+). It carries out the reaction a secondary alcohol + NAD(+) = a ketone + NADH + H(+). The chain is Alcohol dehydrogenase (Adh) from Drosophila differens (Fruit fly).